We begin with the raw amino-acid sequence, 122 residues long: Large ribosomal subunit protein uL14c (122 aa).

The protein belongs to the universal ribosomal protein uL14 family. In terms of assembly, part of the 50S ribosomal subunit.

The protein resides in the plastid. In terms of biological role, binds to 23S rRNA. This Cuscuta gronovii (Common dodder) protein is Large ribosomal subunit protein uL14c.